The chain runs to 456 residues: Antigen Lp49 (456 aa).

The signal sequence occupies residues Met1–Ser34. Residues Cys346 and Cys347 are joined by a disulfide bond.

The protein localises to the cell outer membrane. Its function is as follows. May be involved in virulence. Binds human plasminogen (PLG) and stimulates its proteolytic cleavage to enzymatically active plasmin in the presence of an urokinase-type PLG activator in vitro. Activated plasmin has proteolytic activity which may help the bacteria to spread throughout the host by degrading extracellular matrix components, facilitating tissue penetration and invasion. The sequence is that of Antigen Lp49 from Leptospira interrogans serogroup Icterohaemorrhagiae serovar copenhageni (strain Fiocruz L1-130).